Consider the following 193-residue polypeptide: MIGRIAGTLLEKNPPHLLVDCHGVGYEIDVPMSTFYNLPAIGHPVTLLTQQIVREDAHLLFGFATATERNTFRELIKITGVGARMALAVLSGLSVPELAQAVTMQEAGRLTKIPGIGKKTAERLLLELKGKLGADLGHAPGATPLADSAVDILNALLALGYSEKEAAQAIKQVPAGTGVSDGIKLALKALSKG.

The tract at residues 1–64 (MIGRIAGTLL…EDAHLLFGFA (64 aa)) is domain I. A domain II region spans residues 65 to 144 (TATERNTFRE…DLGHAPGATP (80 aa)). A flexible linker region spans residues 145–151 (LADSAVD). Positions 151-193 (DILNALLALGYSEKEAAQAIKQVPAGTGVSDGIKLALKALSKG) are domain III.

The protein belongs to the RuvA family. In terms of assembly, homotetramer. Forms an RuvA(8)-RuvB(12)-Holliday junction (HJ) complex. HJ DNA is sandwiched between 2 RuvA tetramers; dsDNA enters through RuvA and exits via RuvB. An RuvB hexamer assembles on each DNA strand where it exits the tetramer. Each RuvB hexamer is contacted by two RuvA subunits (via domain III) on 2 adjacent RuvB subunits; this complex drives branch migration. In the full resolvosome a probable DNA-RuvA(4)-RuvB(12)-RuvC(2) complex forms which resolves the HJ.

It localises to the cytoplasm. Functionally, the RuvA-RuvB-RuvC complex processes Holliday junction (HJ) DNA during genetic recombination and DNA repair, while the RuvA-RuvB complex plays an important role in the rescue of blocked DNA replication forks via replication fork reversal (RFR). RuvA specifically binds to HJ cruciform DNA, conferring on it an open structure. The RuvB hexamer acts as an ATP-dependent pump, pulling dsDNA into and through the RuvAB complex. HJ branch migration allows RuvC to scan DNA until it finds its consensus sequence, where it cleaves and resolves the cruciform DNA. This Cupriavidus metallidurans (strain ATCC 43123 / DSM 2839 / NBRC 102507 / CH34) (Ralstonia metallidurans) protein is Holliday junction branch migration complex subunit RuvA.